The following is a 303-amino-acid chain: Ferrochelatase (303 aa).

Fe cation-binding residues include histidine 185 and glutamate 262.

It belongs to the ferrochelatase family.

The protein localises to the cytoplasm. It carries out the reaction heme b + 2 H(+) = protoporphyrin IX + Fe(2+). The protein operates within porphyrin-containing compound metabolism; protoheme biosynthesis; protoheme from protoporphyrin-IX: step 1/1. Catalyzes the ferrous insertion into protoporphyrin IX. This chain is Ferrochelatase, found in Campylobacter jejuni (strain RM1221).